Here is a 539-residue protein sequence, read N- to C-terminus: Dopamine receptor 2 (539 aa).

At 1–113 (MVDDNGSSPE…LPNDRVGLLA (113 aa)) the chain is on the extracellular side. N-linked (GlcNAc...) asparagine glycosylation is found at Asn5, Asn31, Asn47, and Asn68. Residues 114–134 (FLFLFSFATVFGNSLVILAVI) traverse the membrane as a helical segment. Over 135 to 145 (RERYLHTATNY) the chain is Cytoplasmic. Residues 146 to 166 (FITSLAVADCLVGLVVMPFSA) traverse the membrane as a helical segment. Residues 167-189 (LYEVLENTWFFGTDWCDIWRSLD) are Extracellular-facing. Cys182 and Cys261 are joined by a disulfide. Residues 190 to 206 (VLFSTASILNLCVISLD) traverse the membrane as a helical segment. Over 207-227 (RYWAITDPFSYPMRMTVKRAA) the chain is Cytoplasmic. Residues 228–248 (GLIAAVWICSSAISFPAIVWW) form a helical membrane-spanning segment. Topologically, residues 249 to 266 (RAARDGEMPAYKCTFTEH) are extracellular. Residues 267 to 287 (LGYLVFSSTISFYLPLLVMVF) traverse the membrane as a helical segment. The Cytoplasmic portion of the chain corresponds to 288-420 (TYCRIYRAAV…FAKEKKAAKT (133 aa)). Residues 326-387 (GGTTRDQQNQ…EPDDEPLSAL (62 aa)) form a disordered region. A compositionally biased stretch (gly residues) spans 337–352 (SGGGGGGGGGGGGGGS). The segment covering 356–367 (SHSHSHHHHHNH) has biased composition (basic residues). The helical transmembrane segment at 421-441 (LGIVMGVFIICWLPFFVVNLL) threads the bilayer. Topologically, residues 442–453 (SGFCIECIEHEE) are extracellular. The helical transmembrane segment at 454-474 (IVSAIVTWLGWINSCMNPVIY) threads the bilayer. At 475 to 539 (ACWSRDFRRA…RHNSCEQTYI (65 aa)) the chain is on the cytoplasmic side. Residues Cys492 and Cys493 are each lipidated (S-palmitoyl cysteine).

It belongs to the G-protein coupled receptor 1 family. Expressed in both central and peripheral nervous systems.

The protein localises to the cell membrane. Functionally, receptor for dopamine. The activity of this receptor is mediated by G proteins which activate adenylyl cyclase. Also capable of generating a calcium signal. In terms of antagonist responses, would be classed with the D1-like dopamine receptor group. This receptor is an attractive candidate for initiating biochemical cascades underlying olfactory learning. This chain is Dopamine receptor 2 (Dop1R2), found in Drosophila melanogaster (Fruit fly).